The chain runs to 379 residues: tRNA 2-selenouridine synthase (379 aa).

In terms of domain architecture, Rhodanese spans 15-138 (FQQNIPLMDV…ARNYLIKQIE (124 aa)). Cys98 (S-selanylcysteine intermediate) is an active-site residue.

The protein belongs to the SelU family. In terms of assembly, monomer.

It carries out the reaction 5-methylaminomethyl-2-thiouridine(34) in tRNA + selenophosphate + (2E)-geranyl diphosphate + H2O + H(+) = 5-methylaminomethyl-2-selenouridine(34) in tRNA + (2E)-thiogeraniol + phosphate + diphosphate. The catalysed reaction is 5-methylaminomethyl-2-thiouridine(34) in tRNA + (2E)-geranyl diphosphate = 5-methylaminomethyl-S-(2E)-geranyl-thiouridine(34) in tRNA + diphosphate. It catalyses the reaction 5-methylaminomethyl-S-(2E)-geranyl-thiouridine(34) in tRNA + selenophosphate + H(+) = 5-methylaminomethyl-2-(Se-phospho)selenouridine(34) in tRNA + (2E)-thiogeraniol. The enzyme catalyses 5-methylaminomethyl-2-(Se-phospho)selenouridine(34) in tRNA + H2O = 5-methylaminomethyl-2-selenouridine(34) in tRNA + phosphate. Functionally, involved in the post-transcriptional modification of the uridine at the wobble position (U34) of tRNA(Lys), tRNA(Glu) and tRNA(Gln). Catalyzes the conversion of 2-thiouridine (S2U-RNA) to 2-selenouridine (Se2U-RNA). Acts in a two-step process involving geranylation of 2-thiouridine (S2U) to S-geranyl-2-thiouridine (geS2U) and subsequent selenation of the latter derivative to 2-selenouridine (Se2U) in the tRNA chain. In Bdellovibrio bacteriovorus (strain ATCC 15356 / DSM 50701 / NCIMB 9529 / HD100), this protein is tRNA 2-selenouridine synthase.